Consider the following 393-residue polypeptide: tRNA-specific 2-thiouridylase MnmA (393 aa).

Residues Ala19–Ser26 and Leu45 each bind ATP. Cys113 serves as the catalytic Nucleophile. A disulfide bridge connects residues Cys113 and Cys210. Gly137 contacts ATP. Positions Arg160–Gln162 are interaction with tRNA. Residue Cys210 is the Cysteine persulfide intermediate of the active site.

Belongs to the MnmA/TRMU family.

It is found in the cytoplasm. It catalyses the reaction S-sulfanyl-L-cysteinyl-[protein] + uridine(34) in tRNA + AH2 + ATP = 2-thiouridine(34) in tRNA + L-cysteinyl-[protein] + A + AMP + diphosphate + H(+). Catalyzes the 2-thiolation of uridine at the wobble position (U34) of tRNA, leading to the formation of s(2)U34. The chain is tRNA-specific 2-thiouridylase MnmA from Afipia carboxidovorans (strain ATCC 49405 / DSM 1227 / KCTC 32145 / OM5) (Oligotropha carboxidovorans).